Here is a 2622-residue protein sequence, read N- to C-terminus: Ankyrin-3 (2622 aa).

Residues 1 to 44 form a disordered region; it reads MAHAASQLKKNRDLEINAEEETEKKKKHRKRSRDRKKKSDANAS. Residues 25-38 are compositionally biased toward basic residues; it reads KKKHRKRSRDRKKK. Position 39 is a phosphoserine (serine 39). ANK repeat units follow at residues 73–102, 106–135, 139–168, 172–201, 203–230, 242–271, 275–304, 308–337, 341–370, 374–403, 407–436, 440–469, 473–502, 506–535, 539–568, 572–601, 605–634, 638–667, 671–700, 704–733, 737–766, 770–799, and 803–832; these read NGLN…NVDA, KGNT…NVNA, NGFT…SQSL, DGFT…KGKV, LPAL…NADI, SGFT…AVDF, NDIT…KIDA, DGLT…PILS, NGLS…PVDD, DYLT…NPNA, NGFT…SIQA, SGLT…SPNT, RGET…QVEA, DDQT…SPNA, SGYT…SLSI, KGFT…SPDA, SGLT…SPHA, NGYT…DANA, QGIA…NVNL, SGLT…HVDA, MGYT…KVNA, NGYT…SPNE, and NGNT…EIMT. Position 631 is a phosphoserine (serine 631). A phosphoserine mark is found at valine 851, serine 855, serine 869, serine 875, serine 921, serine 924, serine 930, serine 965, serine 967, and serine 1121. The segment at 868 to 889 is disordered; that stretch reads LSDGEYISDGEEGEDAITGDTD. Acidic residues predominate over residues 873-884; that stretch reads YISDGEEGEDAI. 2 ZU5 domains span residues 992–1147 and 1149–1296; these read FLVS…VVSR and KQES…LADC. 2 positions are modified to phosphoserine: serine 1458 and serine 1469. The disordered stretch occupies residues 1510-1539; sequence TPITVPGPAKSGSLSSSPSNTPSASPLKSI. Residues 1515-1536 show a composition bias toward low complexity; it reads PGPAKSGSLSSSPSNTPSASPL. Serine 1621, serine 1624, serine 1679, serine 1984, serine 2102, serine 2114, and serine 2117 each carry phosphoserine. Disordered regions lie at residues 1968-1992, 2099-2147, and 2292-2312; these read VESK…WTEF, ILES…FHEV, and SPDV…KDNQ. The segment covering 1977–1986 has biased composition (basic and acidic residues); that stretch reads PKSDKGHSPE. Positions 2106-2127 are enriched in basic and acidic residues; the sequence is FSQHDQDKSPLSDSGFETRSEK. The segment covering 2128 to 2137 has biased composition (polar residues); that stretch reads TPSAPQSAES. The Death domain maps to 2336–2420; sequence TDIRMAIVAD…DIVTLLEGPI (85 aa). Phosphoserine is present on residues serine 2457, serine 2475, and serine 2544. The segment at 2568 to 2622 is disordered; that stretch reads CVPVGMKKMTRTPADGKARLNLQEEEGSARSEPKQGEGYKVKTKKEIRNVEKKAH. Basic and acidic residues predominate over residues 2594-2622; sequence GSARSEPKQGEGYKVKTKKEIRNVEKKAH.

May be a constituent of a NFASC/NRCAM/ankyrin G complex. Interacts with RHBG. Directly interacts with DMD and betaDAG1; this interaction does not interfere with DMD-binding and is required for DMD and betaDAG1 retention at costameres. Interacts (via N-terminal ANK repeats) with SCHIP1 isoform 7 (via C-terminus); this interaction is required for the localization at axon initial segments (AISs) and nodes of Ranvier (NRs). Interacts with PLEC and FLNC. Interacts (via ANK repeats) with IQCJ-SCHIP1; required for IQCJ-SCHIP1 localization at axon initial segments (AIS) and nodes of Ranvier. Interacts with SCHIP1. Interacts with KCNA1; this inhibits channel activity. Interacts with SCN5A. Interacts with PKP2 and GJA1/CX43. In terms of assembly, interacts (via its C-terminal muscle-specific Obscurin/Titin-Binding-related domain sequence) with PLEC and FLNC. Expressed in the heart (at protein level). Expressed in skeletal muscle (at protein level). Expressed at highest levels in brain and testis, followed by skin, kidney, liver and spleen. As to expression, may be specifically expressed in muscle tissues, including heart and skeletal muscle (extensor digitorum longus) (at protein level). In terms of tissue distribution, expressed in skeletal muscle, brain, lung, heart, testes and kidney.

The protein resides in the cytoplasm. Its subcellular location is the cytoskeleton. The protein localises to the cell projection. It is found in the axon. It localises to the cell membrane. The protein resides in the sarcolemma. Its subcellular location is the postsynaptic cell membrane. The protein localises to the lysosome. It is found in the T-tubule. Its function is as follows. Membrane-cytoskeleton linker. May participate in the maintenance/targeting of ion channels and cell adhesion molecules at the nodes of Ranvier and axonal initial segments. In skeletal muscle, required for costamere localization of DMD and betaDAG1. Regulates KCNA1 channel activity in function of dietary Mg(2+) levels, and thereby contributes to the regulation of renal Mg(2+) reabsorption. Required for intracellular adhesion and junctional conductance in myocytes, potentially via stabilization of GJA1/CX43 protein abundance and promotion of PKP2, GJA1/CX43, and SCN5A/Nav1.5 localization to cell-cell junctions. The protein is Ankyrin-3 (Ank3) of Rattus norvegicus (Rat).